We begin with the raw amino-acid sequence, 520 residues long: Calcium-dependent protein kinase 25 (520 aa).

Glycine 2 is lipidated: N-myristoyl glycine. Residues 31-87 (PLKPQLQDKPPQPMLMNKDDDKTKLNDTHGDPKLLEGKEKPAQKQTSQGQGGRKCSD) form a disordered region. The segment covering 47-72 (NKDDDKTKLNDTHGDPKLLEGKEKPA) has biased composition (basic and acidic residues). The region spanning 132-390 (YNLGSKLGHG…AQQVLCHPWI (259 aa)) is the Protein kinase domain. ATP is bound by residues 138–146 (LGHGQFGTT) and lysine 161. Aspartate 256 serves as the catalytic Proton acceptor. Serine 296 is modified (phosphoserine). The autoinhibitory domain stretch occupies residues 396–426 (APDTPLDTTVLSRLKKFSATDKLKKMALRVI). Residues 433–468 (EEIHELRETFKTIDSGKSGRVTYKELKNGLERFNTN) form the EF-hand 1 domain. Ca(2+) is bound by residues aspartate 446, serine 450, arginine 452, glutamate 457, aspartate 483, glutamate 487, threonine 489, and glutamate 494. Residues 469–505 (LDNSDINSLMQIPTDVHLEDTVDYNEFIEAIVRLRQI) form the EF-hand 2; degenerate domain.

Belongs to the protein kinase superfamily. Ser/Thr protein kinase family. CDPK subfamily.

It localises to the membrane. It carries out the reaction L-seryl-[protein] + ATP = O-phospho-L-seryl-[protein] + ADP + H(+). It catalyses the reaction L-threonyl-[protein] + ATP = O-phospho-L-threonyl-[protein] + ADP + H(+). Activated by calcium. Autophosphorylation may play an important role in the regulation of the kinase activity. May play a role in signal transduction pathways that involve calcium as a second messenger. This chain is Calcium-dependent protein kinase 25 (CPK25), found in Arabidopsis thaliana (Mouse-ear cress).